The sequence spans 631 residues: 1-deoxy-D-xylulose-5-phosphate synthase (631 aa).

Thiamine diphosphate-binding positions include His-73, 113–115 (SHA), Asn-174, Tyr-285, and Glu-367. Mg(2+) is bound at residue Asn-174.

It belongs to the transketolase family. DXPS subfamily. Homodimer. Requires Mg(2+) as cofactor. Thiamine diphosphate serves as cofactor.

The catalysed reaction is D-glyceraldehyde 3-phosphate + pyruvate + H(+) = 1-deoxy-D-xylulose 5-phosphate + CO2. Its pathway is metabolic intermediate biosynthesis; 1-deoxy-D-xylulose 5-phosphate biosynthesis; 1-deoxy-D-xylulose 5-phosphate from D-glyceraldehyde 3-phosphate and pyruvate: step 1/1. Its function is as follows. Catalyzes the acyloin condensation reaction between C atoms 2 and 3 of pyruvate and glyceraldehyde 3-phosphate to yield 1-deoxy-D-xylulose-5-phosphate (DXP). In Streptomyces sp. (strain CL190), this protein is 1-deoxy-D-xylulose-5-phosphate synthase.